We begin with the raw amino-acid sequence, 612 residues long: Proton pump-interactor 1 (612 aa).

The tract at residues 1 to 58 (MGVEVVNSGGFEVAPAPFEGKPEKNGKLDQGKGDDAPINFGSVGELPKNAEENNNKVV) is disordered. Residues 20–35 (GKPEKNGKLDQGKGDD) show a composition bias toward basic and acidic residues. 2 coiled-coil regions span residues 90 to 113 (PKIK…RTGV) and 251 to 314 (LDGV…NSEY). Composition is skewed to basic and acidic residues over residues 374–387 (LSRD…DEKP), 434–446 (EKAK…KNVA), 459–498 (PQKE…EKAA), and 505–519 (AQKE…EQEK). Residues 374–572 (LSRDGRMRNP…PIRNRTRGRG (199 aa)) form a disordered region. Residues 466–526 (VDAATAKEMR…QEKKAKKKTG (61 aa)) adopt a coiled-coil conformation. Over residues 531–545 (TETEEVPEASEEEIE) the composition is skewed to acidic residues. S540 carries the post-translational modification Phosphoserine. A compositionally biased stretch (basic and acidic residues) spans 549–564 (QEEKPQKEKVFKEKPI). The helical transmembrane segment at 591–611 (VYAAPAALVVLLLLVLGYYYV) threads the bilayer.

Belongs to the plant Proton pump-interactor protein family. As to quaternary structure, interacts with AHA1 via N-terminal region. As to expression, strongly expressed in root and shoot vascular systems, particularly in meristematic and sink tissues. Also present in pollen, stigmas and siliques, but not in developing embryos.

The protein resides in the cell membrane. The protein localises to the endoplasmic reticulum membrane. Functionally, promotes AHA1 plasma membrane ATPase activity by binding to a site different from the 14-3-3 binding site. In Arabidopsis thaliana (Mouse-ear cress), this protein is Proton pump-interactor 1 (PPI1).